A 472-amino-acid polypeptide reads, in one-letter code: uncharacterized protein (472 aa).

This sequence to B.subtilis YcdC.

This is an uncharacterized protein from Bacillus subtilis (strain 168).